Consider the following 211-residue polypeptide: Imidazole glycerol phosphate synthase subunit HisH (211 aa).

The Glutamine amidotransferase type-1 domain occupies T4 to I211. Catalysis depends on C82, which acts as the Nucleophile. Catalysis depends on residues H192 and E194.

In terms of assembly, heterodimer of HisH and HisF.

It localises to the cytoplasm. The enzyme catalyses 5-[(5-phospho-1-deoxy-D-ribulos-1-ylimino)methylamino]-1-(5-phospho-beta-D-ribosyl)imidazole-4-carboxamide + L-glutamine = D-erythro-1-(imidazol-4-yl)glycerol 3-phosphate + 5-amino-1-(5-phospho-beta-D-ribosyl)imidazole-4-carboxamide + L-glutamate + H(+). The catalysed reaction is L-glutamine + H2O = L-glutamate + NH4(+). It functions in the pathway amino-acid biosynthesis; L-histidine biosynthesis; L-histidine from 5-phospho-alpha-D-ribose 1-diphosphate: step 5/9. Its function is as follows. IGPS catalyzes the conversion of PRFAR and glutamine to IGP, AICAR and glutamate. The HisH subunit catalyzes the hydrolysis of glutamine to glutamate and ammonia as part of the synthesis of IGP and AICAR. The resulting ammonia molecule is channeled to the active site of HisF. In Corynebacterium efficiens (strain DSM 44549 / YS-314 / AJ 12310 / JCM 11189 / NBRC 100395), this protein is Imidazole glycerol phosphate synthase subunit HisH.